A 199-amino-acid chain; its full sequence is Putative 3-methyladenine DNA glycosylase (199 aa).

This sequence belongs to the DNA glycosylase MPG family.

This is Putative 3-methyladenine DNA glycosylase from Chlorobium phaeobacteroides (strain BS1).